The chain runs to 607 residues: Dolichyl-diphosphooligosaccharide--protein glycosyltransferase subunit 1 (607 aa).

Residues 1-23 form the signal peptide; the sequence is MEAPVARLFLLLLLGSWTPAPGS. Over 24–434 the chain is Lumenal; that stretch reads ASSEAPPLIN…VVHYTFNKVL (411 aa). At K187 the chain carries N6-acetyllysine. N299 carries an N-linked (GlcNAc...) asparagine glycan. A helical membrane pass occupies residues 435-455; the sequence is MLQEPLLVVAAFYILFFTVII. Topologically, residues 456-607 are cytoplasmic; sequence YVRLDFSITK…TKIDHILDAL (152 aa). At K538 the chain carries N6-acetyllysine; alternate. K538 is covalently cross-linked (Glycyl lysine isopeptide (Lys-Gly) (interchain with G-Cter in SUMO2); alternate).

This sequence belongs to the OST1 family. In terms of assembly, component of the oligosaccharyltransferase (OST) complex. OST exists in two different complex forms which contain common core subunits RPN1, RPN2, OST48, OST4, DAD1 and TMEM258, either STT3A or STT3B as catalytic subunits, and form-specific accessory subunits. STT3A complex assembly occurs through the formation of 3 subcomplexes. Subcomplex 1 contains RPN1 and TMEM258, subcomplex 2 contains the STT3A-specific subunits STT3A, DC2/OSTC, and KCP2 as well as the core subunit OST4, and subcomplex 3 contains RPN2, DAD1, and OST48. The STT3A complex can form stable complexes with the Sec61 complex or with both the Sec61 and TRAP complexes. Interacts with TMEM35A/NACHO. In terms of processing, ubiquitinated by the ECS(ASB11) complex. Post-translationally, ufmylated by UFL1 in response to endoplasmic reticulum stress, promoting reticulophagy of endoplasmic reticulum sheets.

It is found in the endoplasmic reticulum membrane. It participates in protein modification; protein glycosylation. Subunit of the oligosaccharyl transferase (OST) complex that catalyzes the initial transfer of a defined glycan (Glc(3)Man(9)GlcNAc(2) in eukaryotes) from the lipid carrier dolichol-pyrophosphate to an asparagine residue within an Asn-X-Ser/Thr consensus motif in nascent polypeptide chains, the first step in protein N-glycosylation. N-glycosylation occurs cotranslationally and the complex associates with the Sec61 complex at the channel-forming translocon complex that mediates protein translocation across the endoplasmic reticulum (ER). All subunits are required for a maximal enzyme activity. In Macaca fascicularis (Crab-eating macaque), this protein is Dolichyl-diphosphooligosaccharide--protein glycosyltransferase subunit 1.